The chain runs to 171 residues: Inosine/xanthosine triphosphatase (171 aa).

8 to 13 (TTNPAK) provides a ligand contact to substrate. Mg(2+)-binding residues include Glu38 and Gln68.

The protein belongs to the YjjX NTPase family. As to quaternary structure, homodimer. The cofactor is Mg(2+). Mn(2+) serves as cofactor.

The catalysed reaction is XTP + H2O = XDP + phosphate + H(+). The enzyme catalyses ITP + H2O = IDP + phosphate + H(+). In terms of biological role, phosphatase that hydrolyzes non-canonical purine nucleotides such as XTP and ITP to their respective diphosphate derivatives. Probably excludes non-canonical purines from DNA/RNA precursor pool, thus preventing their incorporation into DNA/RNA and avoiding chromosomal lesions. This Salmonella typhimurium (strain LT2 / SGSC1412 / ATCC 700720) protein is Inosine/xanthosine triphosphatase (yjjX).